Here is a 1105-residue protein sequence, read N- to C-terminus: Integrator complex subunit 2 (1105 aa).

The helical transmembrane segment at 822–842 threads the bilayer; the sequence is FVFCSPYLLMILLRILKGSLA.

Belongs to the Integrator subunit 2 family. As to quaternary structure, belongs to the multiprotein complex Integrator, at least composed of IntS1, IntS2, IntS3, IntS4, omd/IntS5, IntS6, defl/IntS7, IntS8, IntS9, IntS10, IntS11, IntS12, asun/IntS13, IntS14 and IntS15. The core complex associates with protein phosphatase 2A subunits mts/PP2A and Pp2A-29B, to form the Integrator-PP2A (INTAC) complex.

The protein resides in the nucleus membrane. It localises to the nucleus. Its function is as follows. Component of the integrator complex, a multiprotein complex that terminates RNA polymerase II (Pol II) transcription in the promoter-proximal region of genes. The integrator complex provides a quality checkpoint during transcription elongation by driving premature transcription termination of transcripts that are unfavorably configured for transcriptional elongation: the complex terminates transcription by (1) catalyzing dephosphorylation of the C-terminal domain (CTD) of Pol II subunit Polr2A/Rbp1 and Spt5, and (2) degrading the exiting nascent RNA transcript via endonuclease activity. The integrator complex is also involved in the 3'-end processing of the U7 snRNA, and also the spliceosomal snRNAs U1, U2, U4 and U5. The chain is Integrator complex subunit 2 from Drosophila melanogaster (Fruit fly).